The primary structure comprises 143 residues: MSTGLFDFNGTLPVMGLQVVLLSWLLEQILYSPIQGVIQKRQNKIQQELQLAADQLQKAQQLTQEYQTQLQKAREKARERIRQVQQEAQTMMEDQLKQAQQQMTQLFNEAMQQLEQQKQQALMNLSNQVDEVAKFILSKLMKQ.

The chain crosses the membrane as a helical span at residues Leu12 to Tyr31.

This sequence belongs to the ATPase B chain family. F-type ATPases have 2 components, F(1) - the catalytic core - and F(0) - the membrane proton channel. F(1) has five subunits: alpha(3), beta(3), gamma(1), delta(1), epsilon(1). F(0) has four main subunits: a(1), b(1), b'(1) and c(10-14). The alpha and beta chains form an alternating ring which encloses part of the gamma chain. F(1) is attached to F(0) by a central stalk formed by the gamma and epsilon chains, while a peripheral stalk is formed by the delta, b and b' chains.

It localises to the plastid. The protein localises to the chloroplast thylakoid membrane. Functionally, f(1)F(0) ATP synthase produces ATP from ADP in the presence of a proton or sodium gradient. F-type ATPases consist of two structural domains, F(1) containing the extramembraneous catalytic core and F(0) containing the membrane proton channel, linked together by a central stalk and a peripheral stalk. During catalysis, ATP synthesis in the catalytic domain of F(1) is coupled via a rotary mechanism of the central stalk subunits to proton translocation. Its function is as follows. Component of the F(0) channel, it forms part of the peripheral stalk, linking F(1) to F(0). The b'-subunit is a diverged and duplicated form of b found in plants and photosynthetic bacteria. This is ATP synthase subunit b', chloroplastic from Cyanidioschyzon merolae (strain NIES-3377 / 10D) (Unicellular red alga).